We begin with the raw amino-acid sequence, 81 residues long: Sulfur carrier protein TusA (81 aa).

The active-site Cysteine persulfide intermediate is cysteine 19.

It belongs to the sulfur carrier protein TusA family. As to quaternary structure, interacts with IscS.

The protein resides in the cytoplasm. The protein operates within tRNA modification. Sulfur carrier protein involved in sulfur trafficking in the cell. Part of a sulfur-relay system required for 2-thiolation during synthesis of 2-thiouridine of the modified wobble base 5-methylaminomethyl-2-thiouridine (mnm(5)s(2)U) in tRNA. Interacts with IscS and stimulates its cysteine desulfurase activity. Accepts an activated sulfur from IscS, which is then transferred to TusD, and thus determines the direction of sulfur flow from IscS to 2-thiouridine formation. Also appears to be involved in sulfur transfer for the biosynthesis of molybdopterin. This is Sulfur carrier protein TusA from Serratia proteamaculans (strain 568).